The following is a 110-amino-acid chain: Large ribosomal subunit protein uL22 (110 aa).

Belongs to the universal ribosomal protein uL22 family. Part of the 50S ribosomal subunit.

This protein binds specifically to 23S rRNA; its binding is stimulated by other ribosomal proteins, e.g. L4, L17, and L20. It is important during the early stages of 50S assembly. It makes multiple contacts with different domains of the 23S rRNA in the assembled 50S subunit and ribosome. In terms of biological role, the globular domain of the protein is located near the polypeptide exit tunnel on the outside of the subunit, while an extended beta-hairpin is found that lines the wall of the exit tunnel in the center of the 70S ribosome. The protein is Large ribosomal subunit protein uL22 of Hydrogenovibrio crunogenus (strain DSM 25203 / XCL-2) (Thiomicrospira crunogena).